The chain runs to 421 residues: Gamma-glutamyl phosphate reductase (421 aa).

It belongs to the gamma-glutamyl phosphate reductase family.

The protein localises to the cytoplasm. The enzyme catalyses L-glutamate 5-semialdehyde + phosphate + NADP(+) = L-glutamyl 5-phosphate + NADPH + H(+). Its pathway is amino-acid biosynthesis; L-proline biosynthesis; L-glutamate 5-semialdehyde from L-glutamate: step 2/2. In terms of biological role, catalyzes the NADPH-dependent reduction of L-glutamate 5-phosphate into L-glutamate 5-semialdehyde and phosphate. The product spontaneously undergoes cyclization to form 1-pyrroline-5-carboxylate. The chain is Gamma-glutamyl phosphate reductase from Bordetella petrii (strain ATCC BAA-461 / DSM 12804 / CCUG 43448).